The primary structure comprises 224 residues: Myogenin (224 aa).

Residues serine 77 and serine 79 each carry the phosphoserine; by CaMK2G modification. The bHLH domain occupies 81–132; the sequence is DRRRAATLREKRRLKKVNEAFEALKRSTLLNPNQRLPKVEILRSAIQYIERL. Residue threonine 87 is modified to Phosphothreonine; by CaMK2G.

In terms of assembly, homodimer and heterodimer with E12; heterodimerization enhances MYOG DNA-binding and transcriptional activities. Interacts with SMARCA4/BRG1/BAF190A. Interacts (via C-terminal region) with SSRP1 and SUPT16H; the interaction is indicative of an interaction with the FACT complex. Interacts with CSRP3. Phosphorylated by CAMK2G on threonine and serine amino acids in a muscle activity-dependent manner. Phosphorylation of Thr-87 impairs both DNA-binding and trans-activation functions in contracting muscles.

Its subcellular location is the nucleus. Functionally, acts as a transcriptional activator that promotes transcription of muscle-specific target genes and plays a role in muscle differentiation, cell cycle exit and muscle atrophy. Essential for the development of functional embryonic skeletal fiber muscle differentiation. However is dispensable for postnatal skeletal muscle growth; phosphorylation by CAMK2G inhibits its transcriptional activity in respons to muscle activity. Required for the recruitment of the FACT complex to muscle-specific promoter regions, thus promoting gene expression initiation. During terminal myoblast differentiation, plays a role as a strong activator of transcription at loci with an open chromatin structure previously initiated by MYOD1. Together with MYF5 and MYOD1, co-occupies muscle-specific gene promoter core regions during myogenesis. Also cooperates with myocyte-specific enhancer factor MEF2D and BRG1-dependent recruitment of SWI/SNF chromatin-remodeling enzymes to alter chromatin structure at myogenic late gene promoters. Facilitates cell cycle exit during terminal muscle differentiation through the up-regulation of miR-20a expression, which in turn represses genes involved in cell cycle progression. Binds to the E-box containing (E1) promoter region of the miR-20a gene. Also plays a role in preventing reversal of muscle cell differentiation. Contributes to the atrophy-related gene expression in adult denervated muscles. Induces fibroblasts to differentiate into myoblasts. The chain is Myogenin (MYOG) from Homo sapiens (Human).